Consider the following 1519-residue polypeptide: Dicer-like protein 1 (1519 aa).

Residues 1–13 show a composition bias toward polar residues; that stretch reads MTHQNTETASLAT. Residues 1-62 are disordered; sequence MTHQNTETAS…KDPSQRQRQQ (62 aa). The span at 39–48 shows a compositional bias: acidic residues; that stretch reads SDESEGSEEE. The region spanning 116–297 is the Helicase ATP-binding domain; sequence LFERAKVQNT…EAARNLEALL (182 aa). Residue 129 to 136 participates in ATP binding; sequence LDTGSGKT. A DEAH box motif is present at residues 242–245; sequence DEAH. In terms of domain architecture, Helicase C-terminal spans 431-601; that stretch reads ALSSKVRVLW…QLLPEDRILH (171 aa). In terms of domain architecture, Dicer dsRNA-binding fold spans 634–724; the sequence is AITVLARYAS…NSVYHRRLPA (91 aa). In terms of domain architecture, PAZ spans 882-1001; the sequence is DDIEYQADMP…ICIEPLKISA (120 aa). RNase III domains follow at residues 1026 to 1184 and 1235 to 1387; these read GLEA…LTPG and CRRV…VDSN. Glutamate 1275, aspartate 1373, and glutamate 1376 together coordinate Mg(2+). One can recognise a DRBM domain in the interval 1421 to 1489; that stretch reads TFLHNKLTNE…SENALTELLH (69 aa). Residues cysteine 1433, histidine 1460, cysteine 1501, and cysteine 1503 each coordinate Zn(2+).

The protein belongs to the helicase family. Dicer subfamily. Mg(2+) serves as cofactor. The cofactor is Mn(2+).

Its function is as follows. Dicer-like endonuclease involved in cleaving double-stranded RNA in the RNA interference (RNAi) pathway. Produces 21 to 25 bp dsRNAs (siRNAs) which target the selective destruction of homologous RNAs leading to sequence-specific suppression of gene expression, called post-transcriptional gene silencing (PTGS). Part of a broad host defense response against viral infection and transposons. The sequence is that of Dicer-like protein 1 (dcl1) from Aspergillus terreus (strain NIH 2624 / FGSC A1156).